The chain runs to 538 residues: Phosphoenolpyruvate carboxykinase (ATP) (538 aa).

Substrate is bound by residues Arg64, Tyr205, and Lys211. ATP contacts are provided by residues Lys211, His230, and 246 to 254 (GLSGTGKTT). Residues Lys211 and His230 each coordinate Mn(2+). Asp267 lines the Mn(2+) pocket. ATP contacts are provided by residues Glu295, Arg331, 447–448 (RI), and Thr453. A substrate-binding site is contributed by Arg331.

It belongs to the phosphoenolpyruvate carboxykinase (ATP) family. As to quaternary structure, monomer. Mn(2+) is required as a cofactor.

It localises to the cytoplasm. The catalysed reaction is oxaloacetate + ATP = phosphoenolpyruvate + ADP + CO2. It functions in the pathway carbohydrate biosynthesis; gluconeogenesis. Its function is as follows. Involved in the gluconeogenesis. Catalyzes the conversion of oxaloacetate (OAA) to phosphoenolpyruvate (PEP) through direct phosphoryl transfer between the nucleoside triphosphate and OAA. In Histophilus somni (strain 129Pt) (Haemophilus somnus), this protein is Phosphoenolpyruvate carboxykinase (ATP).